A 468-amino-acid chain; its full sequence is ATP synthase subunit beta (468 aa).

ATP is bound at residue 155–162 (GGAGVGKT).

It belongs to the ATPase alpha/beta chains family. F-type ATPases have 2 components, CF(1) - the catalytic core - and CF(0) - the membrane proton channel. CF(1) has five subunits: alpha(3), beta(3), gamma(1), delta(1), epsilon(1). CF(0) has three main subunits: a(1), b(2) and c(9-12). The alpha and beta chains form an alternating ring which encloses part of the gamma chain. CF(1) is attached to CF(0) by a central stalk formed by the gamma and epsilon chains, while a peripheral stalk is formed by the delta and b chains.

It localises to the cell membrane. The enzyme catalyses ATP + H2O + 4 H(+)(in) = ADP + phosphate + 5 H(+)(out). Produces ATP from ADP in the presence of a proton gradient across the membrane. The catalytic sites are hosted primarily by the beta subunits. The protein is ATP synthase subunit beta of Streptococcus gordonii (strain Challis / ATCC 35105 / BCRC 15272 / CH1 / DL1 / V288).